The primary structure comprises 336 residues: N-acetyl-gamma-glutamyl-phosphate reductase (336 aa).

Cys143 is a catalytic residue.

This sequence belongs to the NAGSA dehydrogenase family. Type 1 subfamily.

It is found in the cytoplasm. It carries out the reaction N-acetyl-L-glutamate 5-semialdehyde + phosphate + NADP(+) = N-acetyl-L-glutamyl 5-phosphate + NADPH + H(+). The protein operates within amino-acid biosynthesis; L-arginine biosynthesis; N(2)-acetyl-L-ornithine from L-glutamate: step 3/4. Functionally, catalyzes the NADPH-dependent reduction of N-acetyl-5-glutamyl phosphate to yield N-acetyl-L-glutamate 5-semialdehyde. In Dictyoglomus thermophilum (strain ATCC 35947 / DSM 3960 / H-6-12), this protein is N-acetyl-gamma-glutamyl-phosphate reductase.